The following is a 392-amino-acid chain: Integrin-linked kinase-associated serine/threonine phosphatase 2C (392 aa).

Methionine 1 is subject to N-acetylmethionine. The disordered stretch occupies residues 1–91 (MDLFGDLPEP…PEEEKNGGEE (91 aa)). A compositionally biased stretch (low complexity) spans 31–40 (DLPPTSSTDS). Positions 59–70 (SGSLATSGSQVV) are enriched in polar residues. Positions 72–91 (NEGKGAKRKAPEEEKNGGEE) are enriched in basic and acidic residues. In terms of domain architecture, PPM-type phosphatase spans 108–390 (KGYVAERKGE…DNVTVMVVRI (283 aa)). Residues aspartate 152 and glycine 153 each coordinate Mn(2+). Lysine 210 bears the N6-acetyllysine mark. Mn(2+) is bound by residues aspartate 326 and aspartate 381.

It belongs to the PP2C family. Interacts with ILK. Mg(2+) serves as cofactor. It depends on Mn(2+) as a cofactor. Widely expressed. Highest expression observed in kidney, liver and muscle.

The protein localises to the cytoplasm. The enzyme catalyses O-phospho-L-seryl-[protein] + H2O = L-seryl-[protein] + phosphate. It catalyses the reaction O-phospho-L-threonyl-[protein] + H2O = L-threonyl-[protein] + phosphate. Protein phosphatase that may play a role in regulation of cell cycle progression via dephosphorylation of its substrates whose appropriate phosphorylation states might be crucial for cell proliferation. Selectively associates with integrin linked kinase (ILK), to modulate cell adhesion and growth factor signaling. Inhibits the ILK-GSK3B signaling axis and may play an important role in inhibiting oncogenic transformation. The protein is Integrin-linked kinase-associated serine/threonine phosphatase 2C (Ilkap) of Rattus norvegicus (Rat).